The following is a 245-amino-acid chain: Extracellular protein ARB_04177 (245 aa).

The protein localises to the secreted. The chain is Extracellular protein ARB_04177 from Arthroderma benhamiae (strain ATCC MYA-4681 / CBS 112371) (Trichophyton mentagrophytes).